The following is a 627-amino-acid chain: (-)-alpha-pinene synthase 2, chloroplastic (627 aa).

Residues 1–36 (MALVSVAPMASRSCLHKSLSSSAHELKTICRTIPTL) constitute a chloroplast transit peptide. Asp378, Asp382, and Asp530 together coordinate Mg(2+). Positions 378–382 (DDMYD) match the DDXXD motif motif.

Belongs to the terpene synthase family. Tpsd subfamily. Requires Mg(2+) as cofactor. Mn(2+) serves as cofactor.

Its subcellular location is the plastid. It localises to the chloroplast. It carries out the reaction (2E)-geranyl diphosphate = (1S,5S)-alpha-pinene + diphosphate. The enzyme catalyses (2E)-geranyl diphosphate = (1S,5S)-beta-pinene + diphosphate. It functions in the pathway terpene metabolism; oleoresin biosynthesis. Functionally, involved in defensive oleoresin formation in conifers in response to insect attack or other injury. Involved in monoterpene (C10) olefins biosynthesis. A mixture of alpha- and beta-pinene (35:10) is produced by this enzyme. This Picea sitchensis (Sitka spruce) protein is (-)-alpha-pinene synthase 2, chloroplastic.